Reading from the N-terminus, the 396-residue chain is Probable sugar efflux transporter (396 aa).

Helical transmembrane passes span Val-15 to Leu-35, Val-50 to Leu-70, Leu-81 to Phe-101, Val-103 to Ala-123, Ala-136 to Ile-156, Thr-169 to Pro-189, Leu-202 to Val-222, Phe-246 to Gly-266, Ser-275 to Ala-295, Leu-301 to Val-321, Val-333 to Gly-353, and Ala-364 to Phe-384.

This sequence belongs to the major facilitator superfamily. SotB (TC 2.A.1.2) family.

It localises to the cell inner membrane. Involved in the efflux of sugars. The physiological role may be the reduction of the intracellular concentration of toxic sugars or sugar metabolites. The polypeptide is Probable sugar efflux transporter (Salmonella paratyphi A (strain ATCC 9150 / SARB42)).